The sequence spans 268 residues: MAIIDKKRVNQNFSRGAKTYDNYAQVQKHMADKLEIFVHGSKKQYNILEVGCGTGIFSQKILKRFPNSKIDLLDISPAMVETAKEKLGDSPNLNFIVEDVENYNPEKKYDLIFSNATFQWIDDQMRLFNHLYSLLDYGGKIAFSTFGNKTYFELRESLSTLDPELKYSQKFVKLDEMTEITNKNFRILAADEDFFIEKFENVMAFLKAIKGIGSNSALSNKRNFTREKFKALDKIYRDKFGDKNIINVTNHLLYMVLEKVKMRDENLK.

The protein belongs to the methyltransferase superfamily.

The catalysed reaction is malonyl-[ACP] + S-adenosyl-L-methionine = malonyl-[ACP] methyl ester + S-adenosyl-L-homocysteine. Its pathway is cofactor biosynthesis; biotin biosynthesis. Functionally, converts the free carboxyl group of a malonyl-thioester to its methyl ester by transfer of a methyl group from S-adenosyl-L-methionine (SAM). It allows to synthesize pimeloyl-ACP via the fatty acid synthetic pathway. The polypeptide is Malonyl-[acyl-carrier protein] O-methyltransferase 1 (Ilyobacter polytropus (strain ATCC 51220 / DSM 2926 / LMG 16218 / CuHBu1)).